The sequence spans 213 residues: 5-deoxy-D-ribulose 1-phosphate aldolase (213 aa).

Substrate is bound by residues 28-29 (GN), 45-46 (SG), and 74-76 (SSE). E76 functions as the Proton donor/acceptor in the catalytic mechanism. Mn(2+)-binding residues include E76, H95, H97, and H157.

It belongs to the aldolase class II family. As to quaternary structure, forms homooligomers, possibly homotetramers. It depends on Mn(2+) as a cofactor.

The catalysed reaction is 5-deoxy-D-ribulose 1-phosphate = dihydroxyacetone phosphate + acetaldehyde. Its pathway is carbohydrate degradation. Catalyzes the cleavage of 5-deoxy-D-ribulose 1-phosphate to yield dihydroxyacetone phosphate (DHAP) and acetaldehyde, as part of a 5-deoxyribose salvage pathway that recycles this toxic radical SAM enzyme by-product to mainstream metabolites. Is also able to catalyze the reverse reaction, using several aldehydes as substrate, with acetaldehyde being the preferred substrate. The protein is 5-deoxy-D-ribulose 1-phosphate aldolase of Bacillus thuringiensis serovar kurstaki (strain ATCC 35866 / NRRL B-4488 / HD73).